We begin with the raw amino-acid sequence, 134 residues long: Loki profilin-1 (134 aa).

The segment at 55 to 62 (LALGKKGI) is loki loop.

It belongs to the Asgard profilin family.

It is found in the cytoplasm. The protein localises to the cytoskeleton. With respect to regulation, inhibition of rabbit actin polymerization is reduced by phosphatidylinositol-(4,5)-P2(1,2-dipalmitoyl), a soluble form of the phospholipid phosphatidylinositol, suggesting an unknown lipid might regulate actin-profilin interaction in vivo. Binds to actin and affects the structure of the cytoskeleton. At high concentrations inhibits spontaneous rabbit actin nucleation. This strongly suggests this archaea has a profilin-regulated actin system, and actin-type genes can be identified in this organism. This chain is Loki profilin-1, found in Lokiarchaeum sp. (strain GC14_75).